The following is a 473-amino-acid chain: ATP synthase subunit beta (473 aa).

153 to 160 (GGAGVGKT) provides a ligand contact to ATP.

Belongs to the ATPase alpha/beta chains family. As to quaternary structure, F-type ATPases have 2 components, CF(1) - the catalytic core - and CF(0) - the membrane proton channel. CF(1) has five subunits: alpha(3), beta(3), gamma(1), delta(1), epsilon(1). CF(0) has three main subunits: a(1), b(2) and c(9-12). The alpha and beta chains form an alternating ring which encloses part of the gamma chain. CF(1) is attached to CF(0) by a central stalk formed by the gamma and epsilon chains, while a peripheral stalk is formed by the delta and b chains.

The protein localises to the cell inner membrane. It carries out the reaction ATP + H2O + 4 H(+)(in) = ADP + phosphate + 5 H(+)(out). In terms of biological role, produces ATP from ADP in the presence of a proton gradient across the membrane. The catalytic sites are hosted primarily by the beta subunits. This is ATP synthase subunit beta from Rickettsia massiliae (strain Mtu5).